Consider the following 253-residue polypeptide: Histone H1.4 (253 aa).

Residues M1–S33 show a composition bias toward low complexity. A disordered region spans residues M1–V43. S2 is modified (N-acetylserine). The 77-residue stretch at A51–E127 folds into the H15 domain. A disordered region spans residues K134–A253. Composition is skewed to basic and acidic residues over residues A139–A149 and A188–V200. 2 stretches are compositionally biased toward basic residues: residues K201–A210 and A234–K244.

The protein belongs to the histone H1/H5 family.

The protein localises to the nucleus. It is found in the chromosome. Its function is as follows. Histones H1 are necessary for the condensation of nucleosome chains into higher-order structures. This Caenorhabditis elegans protein is Histone H1.4 (hil-4).